Here is a 306-residue protein sequence, read N- to C-terminus: Mitochondrial basic amino acids transporter (306 aa).

6 consecutive transmembrane segments (helical) span residues 2–22 (ALDF…GHPF), 61–81 (GLGS…GVQG), 96–116 (FLAG…MELA), 153–172 (GMVS…FLTY), 187–207 (LLVP…WLST), and 255–275 (LLRA…VLTY). 3 Solcar repeats span residues 2–86 (ALDF…TLRA), 90–178 (DSPL…LTRA), and 190–275 (PKLL…VLTY). Residues 283 to 306 (VDSEAAPGASTTPAGPALAQPSSL) form a disordered region. Positions 287-306 (AAPGASTTPAGPALAQPSSL) are enriched in low complexity.

This sequence belongs to the mitochondrial carrier (TC 2.A.29) family.

Its subcellular location is the mitochondrion inner membrane. It catalyses the reaction L-lysine(out) + L-arginine(in) = L-lysine(in) + L-arginine(out). The enzyme catalyses L-histidine(out) + L-arginine(in) = L-histidine(in) + L-arginine(out). The catalysed reaction is L-ornithine(in) + L-arginine(out) = L-ornithine(out) + L-arginine(in). It carries out the reaction L-homoarginine(in) + L-arginine(out) = L-homoarginine(out) + L-arginine(in). It catalyses the reaction N(omega)-methyl-L-arginine(in) + L-arginine(out) = N(omega)-methyl-L-arginine(out) + L-arginine(in). The enzyme catalyses L-arginine(in) = L-arginine(out). The catalysed reaction is L-lysine(in) = L-lysine(out). It carries out the reaction L-ornithine(in) = L-ornithine(out). It catalyses the reaction L-histidine(out) = L-histidine(in). In terms of biological role, mitochondrial transporter of arginine, lysine, homoarginine, methylarginine and, to a much lesser extent, ornithine and histidine. Does not transport carnitine nor acylcarnitines. Functions by both counter-exchange and uniport mechanisms. Plays a physiological role in the import of basic amino acids into mitochondria for mitochondrial protein synthesis and amino acid degradation. The polypeptide is Mitochondrial basic amino acids transporter (Slc25a29) (Rattus norvegicus (Rat)).